The chain runs to 1234 residues: DNA-directed RNA polymerase subunit beta (1234 aa).

The segment at 1187 to 1234 (GREDAPPEEVYEEEYEEEPEELPEDIDFEPDNFDIDSEDLFMDDDYDG) is disordered. Acidic residues predominate over residues 1192-1234 (PPEEVYEEEYEEEPEELPEDIDFEPDNFDIDSEDLFMDDDYDG).

It belongs to the RNA polymerase beta chain family. The RNAP catalytic core consists of 2 alpha, 1 beta, 1 beta' and 1 omega subunit. When a sigma factor is associated with the core the holoenzyme is formed, which can initiate transcription.

It catalyses the reaction RNA(n) + a ribonucleoside 5'-triphosphate = RNA(n+1) + diphosphate. DNA-dependent RNA polymerase catalyzes the transcription of DNA into RNA using the four ribonucleoside triphosphates as substrates. This is DNA-directed RNA polymerase subunit beta from Caldanaerobacter subterraneus subsp. tengcongensis (strain DSM 15242 / JCM 11007 / NBRC 100824 / MB4) (Thermoanaerobacter tengcongensis).